The primary structure comprises 969 residues: Probable Rho-type GTPase-activating protein 3 (969 aa).

LIM zinc-binding domains lie at 17–81 (TVCF…CTAC) and 76–135 (HTCT…RHPS). 3 disordered regions span residues 170–223 (IEIM…ADSL), 348–459 (ATSP…VEEL), and 613–646 (TSSKNTTSSINPLTAVSSNSGQSSGRPGPLSPNL). A compositionally biased stretch (polar residues) spans 193-202 (ETPTNMSQAE). Low complexity-rich tracts occupy residues 212 to 223 (DSNLASNSADSL) and 350 to 361 (SPFRPFSPSYRS). 2 stretches are compositionally biased toward polar residues: residues 369-392 (TRSPNVQTHKKTSSQPSDLSSFAQ) and 418-432 (LSETSQQTLVPSLGS). Residues 450–459 (SERDSDVEEL) show a composition bias toward basic and acidic residues. Residues 613–623 (TSSKNTTSSIN) show a composition bias toward low complexity. Over residues 624–637 (PLTAVSSNSGQSSG) the composition is skewed to polar residues. The Phorbol-ester/DAG-type zinc-finger motif lies at 697-744 (DHVFHVNAIFKPSRCYICSESVWGSELRCFHCSISCHSRCLKRLFAES). Residues 780–966 (RSLENQLKIE…FMLDNVDKIL (187 aa)) form the Rho-GAP domain.

Interacts with dil1.

It is found in the cell tip. In terms of biological role, GTPase-activating protein for Rho-type proteins. This Schizosaccharomyces pombe (strain 972 / ATCC 24843) (Fission yeast) protein is Probable Rho-type GTPase-activating protein 3 (rga3).